The primary structure comprises 428 residues: UDP-N-acetylglucosamine 1-carboxyvinyltransferase (428 aa).

A phosphoenolpyruvate-binding site is contributed by 25-26 (KN). Arg102 is a UDP-N-acetyl-alpha-D-glucosamine binding site. Cys126 acts as the Proton donor in catalysis. Position 126 is a 2-(S-cysteinyl)pyruvic acid O-phosphothioketal (Cys126). UDP-N-acetyl-alpha-D-glucosamine is bound by residues Asp316 and Val338.

Belongs to the EPSP synthase family. MurA subfamily.

The protein resides in the cytoplasm. The enzyme catalyses phosphoenolpyruvate + UDP-N-acetyl-alpha-D-glucosamine = UDP-N-acetyl-3-O-(1-carboxyvinyl)-alpha-D-glucosamine + phosphate. It participates in cell wall biogenesis; peptidoglycan biosynthesis. Cell wall formation. Adds enolpyruvyl to UDP-N-acetylglucosamine. The sequence is that of UDP-N-acetylglucosamine 1-carboxyvinyltransferase from Anaplasma marginale (strain Florida).